The following is a 110-amino-acid chain: Flagellar hook-basal body complex protein FliE (110 aa).

The protein belongs to the FliE family.

Its subcellular location is the bacterial flagellum basal body. The polypeptide is Flagellar hook-basal body complex protein FliE (Pseudomonas entomophila (strain L48)).